A 236-amino-acid chain; its full sequence is Uridylate kinase (236 aa).

10 to 13 (KLSG) contacts ATP. G52 is a UMP binding site. Residues G53 and R57 each coordinate ATP. Residues D72 and 133 to 140 (TGNPFFTT) each bind UMP. 3 residues coordinate ATP: T160, Y166, and D169.

The protein belongs to the UMP kinase family. Homohexamer.

The protein localises to the cytoplasm. It catalyses the reaction UMP + ATP = UDP + ADP. It participates in pyrimidine metabolism; CTP biosynthesis via de novo pathway; UDP from UMP (UMPK route): step 1/1. Its activity is regulated as follows. Inhibited by UTP. In terms of biological role, catalyzes the reversible phosphorylation of UMP to UDP. The polypeptide is Uridylate kinase (Polaromonas naphthalenivorans (strain CJ2)).